A 292-amino-acid chain; its full sequence is Undecaprenyl-diphosphatase (292 aa).

A run of 7 helical transmembrane segments spans residues 1 to 21 (MSLVSAALFGLLQALTEFLPV), 46 to 66 (FVTIIQAGTTLAVLVYFRADI), 90 to 110 (LGWYIVLGTVPAALAGKLLEH), 114 to 134 (ALGNWVIAGSLVALGLVLLAA), 192 to 212 (FLLSVPITLAAGAYKLWSTVP), 225 to 245 (VVGTVVSAVAGYLVIDWLLAW), and 253 to 273 (VFVVWRLAAGAAIAALILSGV).

The protein belongs to the UppP family.

The protein localises to the cell inner membrane. The enzyme catalyses di-trans,octa-cis-undecaprenyl diphosphate + H2O = di-trans,octa-cis-undecaprenyl phosphate + phosphate + H(+). Its function is as follows. Catalyzes the dephosphorylation of undecaprenyl diphosphate (UPP). Confers resistance to bacitracin. In Anaeromyxobacter dehalogenans (strain 2CP-1 / ATCC BAA-258), this protein is Undecaprenyl-diphosphatase.